The chain runs to 500 residues: Probable malate:quinone oxidoreductase (500 aa).

This sequence belongs to the MQO family. It depends on FAD as a cofactor.

It catalyses the reaction (S)-malate + a quinone = a quinol + oxaloacetate. It participates in carbohydrate metabolism; tricarboxylic acid cycle; oxaloacetate from (S)-malate (quinone route): step 1/1. This chain is Probable malate:quinone oxidoreductase, found in Bordetella avium (strain 197N).